The following is a 176-amino-acid chain: Large ribosomal subunit protein bL17m (176 aa).

The N-terminal 8 residues, 1–8 (MRLSLAAA), are a transit peptide targeting the mitochondrion.

It belongs to the bacterial ribosomal protein bL17 family. In terms of assembly, component of the mitochondrial ribosome large subunit (39S) which comprises a 16S rRNA and about 50 distinct proteins.

It is found in the mitochondrion. This Mus musculus (Mouse) protein is Large ribosomal subunit protein bL17m (Mrpl17).